Consider the following 169-residue polypeptide: UPF0316 protein Dde_2502 (169 aa).

A run of 3 helical transmembrane segments spans residues 1–21, 38–58, and 68–88; these read MITA…LCDV, LAFS…SRVI, and LAFA…EGVF.

Belongs to the UPF0316 family.

Its subcellular location is the cell membrane. The protein is UPF0316 protein Dde_2502 of Oleidesulfovibrio alaskensis (strain ATCC BAA-1058 / DSM 17464 / G20) (Desulfovibrio alaskensis).